A 320-amino-acid polypeptide reads, in one-letter code: Malate dehydrogenase (320 aa).

Residues 10–15 and Asp34 each bind NAD(+); that span reads GAGNIG. Substrate-binding residues include Arg83 and Arg89. NAD(+)-binding positions include Asn96 and 119-121; that span reads ITN. Residues Asn121 and Arg152 each contribute to the substrate site. Residue His176 is the Proton acceptor of the active site.

This sequence belongs to the LDH/MDH superfamily. MDH type 3 family.

The enzyme catalyses (S)-malate + NAD(+) = oxaloacetate + NADH + H(+). In terms of biological role, catalyzes the reversible oxidation of malate to oxaloacetate. This chain is Malate dehydrogenase, found in Rhizorhabdus wittichii (strain DSM 6014 / CCUG 31198 / JCM 15750 / NBRC 105917 / EY 4224 / RW1) (Sphingomonas wittichii).